A 143-amino-acid polypeptide reads, in one-letter code: Large ribosomal subunit protein uL11 (143 aa).

The protein belongs to the universal ribosomal protein uL11 family. As to quaternary structure, part of the ribosomal stalk of the 50S ribosomal subunit. Interacts with L10 and the large rRNA to form the base of the stalk. L10 forms an elongated spine to which L12 dimers bind in a sequential fashion forming a multimeric L10(L12)X complex. In terms of processing, one or more lysine residues are methylated.

Functionally, forms part of the ribosomal stalk which helps the ribosome interact with GTP-bound translation factors. The sequence is that of Large ribosomal subunit protein uL11 from Teredinibacter turnerae (strain ATCC 39867 / T7901).